The sequence spans 1363 residues: DNA-directed RNA polymerase subunit beta (1363 aa).

This sequence belongs to the RNA polymerase beta chain family. The RNAP catalytic core consists of 2 alpha, 1 beta, 1 beta' and 1 omega subunit. When a sigma factor is associated with the core the holoenzyme is formed, which can initiate transcription.

It carries out the reaction RNA(n) + a ribonucleoside 5'-triphosphate = RNA(n+1) + diphosphate. Its function is as follows. DNA-dependent RNA polymerase catalyzes the transcription of DNA into RNA using the four ribonucleoside triphosphates as substrates. This chain is DNA-directed RNA polymerase subunit beta, found in Neorickettsia risticii (Ehrlichia risticii).